The following is a 409-amino-acid chain: Imidazolonepropionase (409 aa).

His78 and His80 together coordinate Fe(3+). His78 and His80 together coordinate Zn(2+). 4-imidazolone-5-propanoate-binding residues include Arg87, Tyr150, and His183. Tyr150 serves as a coordination point for N-formimidoyl-L-glutamate. His248 lines the Fe(3+) pocket. Zn(2+) is bound at residue His248. Gln251 lines the 4-imidazolone-5-propanoate pocket. Position 323 (Asp323) interacts with Fe(3+). Asp323 contributes to the Zn(2+) binding site. N-formimidoyl-L-glutamate contacts are provided by Asn325 and Gly327. Thr328 lines the 4-imidazolone-5-propanoate pocket.

Belongs to the metallo-dependent hydrolases superfamily. HutI family. Zn(2+) is required as a cofactor. Requires Fe(3+) as cofactor.

Its subcellular location is the cytoplasm. It carries out the reaction 4-imidazolone-5-propanoate + H2O = N-formimidoyl-L-glutamate. It functions in the pathway amino-acid degradation; L-histidine degradation into L-glutamate; N-formimidoyl-L-glutamate from L-histidine: step 3/3. Functionally, catalyzes the hydrolytic cleavage of the carbon-nitrogen bond in imidazolone-5-propanoate to yield N-formimidoyl-L-glutamate. It is the third step in the universal histidine degradation pathway. This Mesorhizobium japonicum (strain LMG 29417 / CECT 9101 / MAFF 303099) (Mesorhizobium loti (strain MAFF 303099)) protein is Imidazolonepropionase.